A 311-amino-acid polypeptide reads, in one-letter code: tRNA dimethylallyltransferase (311 aa).

Gly9 to Thr16 is a binding site for ATP. Residue Thr11–Thr16 participates in substrate binding. Residues Asp34 to Gln37 are interaction with substrate tRNA.

This sequence belongs to the IPP transferase family. In terms of assembly, monomer. Mg(2+) serves as cofactor.

It carries out the reaction adenosine(37) in tRNA + dimethylallyl diphosphate = N(6)-dimethylallyladenosine(37) in tRNA + diphosphate. Catalyzes the transfer of a dimethylallyl group onto the adenine at position 37 in tRNAs that read codons beginning with uridine, leading to the formation of N6-(dimethylallyl)adenosine (i(6)A). The sequence is that of tRNA dimethylallyltransferase from Clostridium botulinum (strain Langeland / NCTC 10281 / Type F).